Consider the following 194-residue polypeptide: RNA polymerase II subunit A C-terminal domain phosphatase SSU72 like protein 1 (194 aa).

The protein belongs to the SSU72 phosphatase family.

The protein localises to the nucleus. It catalyses the reaction O-phospho-L-seryl-[protein] + H2O = L-seryl-[protein] + phosphate. The enzyme catalyses O-phospho-L-threonyl-[protein] + H2O = L-threonyl-[protein] + phosphate. Protein phosphatase that catalyzes the dephosphorylation of the C-terminal domain of RNA polymerase II. Plays a role in RNA processing and termination. In Homo sapiens (Human), this protein is RNA polymerase II subunit A C-terminal domain phosphatase SSU72 like protein 1.